The sequence spans 504 residues: MAVKLQADEISSIIKERIENFEIDVDINEIGKVVGIADGITTVYGLNNVMAGEVVEFDNGAKGLVLNLEEANVGVVVLGTSAGIKEGMSVKRSGALLKTPVGDGLMGRVVNPLGDPIDGKGTIETAEYRFIEEKAPGIMARKSVHEPLQTGIKAIDALVPVGRGQRELIIGDRQTGKTTLAIDTIINQKGQDVVCIYVAIGQKQSTVAATVKKLEEHGALDYTIIVNAGASDSAALQFLAPYAGVTMAEYFRDNGRHAVIFYDDLSKHAVAYREMSLILRRPPGREAYPGDVFYLHSRLLERAAKLSDELGAGSITAFPIIETQAGDVAAYIPTNVISITDGQIFLETDLFNSGIRPAINVGLSVSRVGGAAQIKAIKQVSGTLRLDLASFRELQAFAQFASDLDDYTRSQLERGQRMVEVLKQGPYVPVPVEKQVVIIFAGANGYLDDIAASSVTKFEAELMPFMEAKYASVLDAIRNEKKISDDTDAQLRKAIEDFKTSFAG.

Position 171 to 178 (171 to 178) interacts with ATP; sequence GDRQTGKT.

It belongs to the ATPase alpha/beta chains family. F-type ATPases have 2 components, CF(1) - the catalytic core - and CF(0) - the membrane proton channel. CF(1) has five subunits: alpha(3), beta(3), gamma(1), delta(1), epsilon(1). CF(0) has three main subunits: a(1), b(2) and c(9-12). The alpha and beta chains form an alternating ring which encloses part of the gamma chain. CF(1) is attached to CF(0) by a central stalk formed by the gamma and epsilon chains, while a peripheral stalk is formed by the delta and b chains.

Its subcellular location is the cell inner membrane. The catalysed reaction is ATP + H2O + 4 H(+)(in) = ADP + phosphate + 5 H(+)(out). Functionally, produces ATP from ADP in the presence of a proton gradient across the membrane. The alpha chain is a regulatory subunit. This chain is ATP synthase subunit alpha, found in Sulfurovum sp. (strain NBC37-1).